The chain runs to 511 residues: Myrosinase 4 (511 aa).

The N-terminal stretch at 1–23 (MAIPKAHYSLAVLVLLFVVVSSS) is a signal peptide. Disulfide bonds link Cys-31-Cys-450, Cys-39-Cys-445, and Cys-230-Cys-233. Residues Asn-46 and Asn-53 are each glycosylated (N-linked (GlcNAc...) asparagine). A beta-D-glucoside-binding positions include Gln-64, His-165, and 210-211 (NQ). A beta-D-glucoside is bound by residues Tyr-351 and Glu-418. Glu-418 functions as the Nucleophile in the catalytic mechanism. N-linked (GlcNAc...) asparagine glycosylation occurs at Asn-428. A beta-D-glucoside-binding positions include Trp-467, 474-475 (EF), and Phe-483. A glycan (N-linked (GlcNAc...) asparagine) is linked at Asn-489.

The protein belongs to the glycosyl hydrolase 1 family. Specifically expressed in roots.

The catalysed reaction is a thioglucoside + H2O = a sugar + a thiol.. It catalyses the reaction Hydrolysis of terminal, non-reducing beta-D-glucosyl residues with release of beta-D-glucose.. Hydrolyzes sinigrin and, with lower efficiency, p-nitrophenyl beta-D-glucoside. In Arabidopsis thaliana (Mouse-ear cress), this protein is Myrosinase 4.